The following is a 942-amino-acid chain: MSTDSKRYCIKTKHVAIICAAVVAVGLIVGLSVGLTRSCDSKDGGQGTTQSPSHLPPTSSPPQDQGVCPASEDESGNWRDFRLPDFINPVHYDLQVKPLLEQDTYTGTVNISINVTSPTQHLWLHLRETRITQLPVLWRPSGEQVQVRRCFEYKKQEYVVVEAEEELAPNSGEGLYHLTMEFAGWLNGSLVGFYRTTYVEKGQIKSIAATDHEPTDARKSFPCFDEPNKKATYTISIIHPKEYKALSNMPVEKEESVDDIWTQTTFQKSVPMSTYLVCFAVHQFDSVTRTSRSGKPLTIYVQPEQKHTAEYAANITKSVFDYFEDYFAMEYSLPKLDKIAIPDFGTGAMENWGLITYRETNLLYDPNESASSNQQRVAAVVAHELVHQWFGNIVTMEWWEDLWLNEGFASFFEFLGVDHAEKEWQMRDQILLEDVLPVQEDDSLISSHPIVVTVSTPAEITSVFDGISYSKGASILRMLEDWITPEKFQKGCQEYLKKFEFKNAKTSDFWEALEEASNLPVKEVMDTWTNQMGYPVLNVEDMRIISQKRFLLDPNANSSEPHSVFGYTWNIPVRWTNDNESTITIYNRSETGGITLNSSNPNGNAFLKINPDHIGFYRVNYEVSTWEWIATNLSLNHKDFSTADRASLIDDAFALARAQLLNYKEALNLTKYLKMEDEYLPWQRVISAVTYIISMFEDDKELYPMIEKYFRDQVKPIADSLGWNDNGDHLTKLLRASVLGFACKMGDSNALNNASHLFEQWLTGTVSLPVNLRLLVYRYGMQNSGNETSWNYTLKQYQETSLAQEKEKLLYGLASVKNVALLSRYLDLLKDPNVIKSQDVFTVIRYISYNSYGKTMAWNWIQLNWEYLVNRYTLNDRNLGRIVTIAEPFNTELQLWQMESFFKRYPEAGAGEKPREQVLETVKNNIEWLKQNRDTIRDWFFN.

Residues 1-14 lie on the Cytoplasmic side of the membrane; it reads MSTDSKRYCIKTKH. The chain crosses the membrane as a helical; Signal-anchor for type II membrane protein span at residues 15–35; the sequence is VAIICAAVVAVGLIVGLSVGL. At 36 to 942 the chain is on the extracellular side; that stretch reads TRSCDSKDGG…RDTIRDWFFN (907 aa). The disordered stretch occupies residues 40–74; it reads DSKDGGQGTTQSPSHLPPTSSPPQDQGVCPASEDE. 3 N-linked (GlcNAc...) asparagine glycosylation sites follow: asparagine 110, asparagine 114, and asparagine 187. Glutamate 213 serves as a coordination point for substrate. The N-linked (GlcNAc...) asparagine glycan is linked to asparagine 314. 347–351 contacts substrate; the sequence is GAMEN. An N-linked (GlcNAc...) asparagine glycan is attached at asparagine 367. Histidine 383 serves as a coordination point for Zn(2+). The active-site Proton acceptor is the glutamate 384. Residues histidine 387 and glutamate 406 each coordinate Zn(2+). Asparagine 557, asparagine 579, asparagine 587, asparagine 597, asparagine 632, asparagine 668, asparagine 753, asparagine 786, and asparagine 791 each carry an N-linked (GlcNAc...) asparagine glycan. Substrate is bound at residue arginine 877.

The protein belongs to the peptidase M1 family. As to quaternary structure, homodimer; disulfide-linked. It depends on Zn(2+) as a cofactor.

The protein resides in the cell membrane. The catalysed reaction is Release of N-terminal glutamate (and to a lesser extent aspartate) from a peptide.. Substrate specificity is modulated by calcium which enhances the enzymatic activity for cleavage of acidic residues while reducing its activity with basic residues. Inhibited by aminopeptidase inhibitors amastatin and bestatin. In terms of biological role, regulates central hypertension through its calcium-modulated preference to cleave N-terminal acidic residues from peptides such as angiotensin II. This chain is Glutamyl aminopeptidase (ENPEP), found in Sus scrofa (Pig).